Reading from the N-terminus, the 223-residue chain is Deoxyribose-phosphate aldolase (223 aa).

The active-site Proton donor/acceptor is D89. K152 (schiff-base intermediate with acetaldehyde) is an active-site residue. K181 acts as the Proton donor/acceptor in catalysis.

This sequence belongs to the DeoC/FbaB aldolase family. DeoC type 1 subfamily.

The protein resides in the cytoplasm. The catalysed reaction is 2-deoxy-D-ribose 5-phosphate = D-glyceraldehyde 3-phosphate + acetaldehyde. Its pathway is carbohydrate degradation; 2-deoxy-D-ribose 1-phosphate degradation; D-glyceraldehyde 3-phosphate and acetaldehyde from 2-deoxy-alpha-D-ribose 1-phosphate: step 2/2. Functionally, catalyzes a reversible aldol reaction between acetaldehyde and D-glyceraldehyde 3-phosphate to generate 2-deoxy-D-ribose 5-phosphate. The sequence is that of Deoxyribose-phosphate aldolase from Bacillus cereus (strain ATCC 14579 / DSM 31 / CCUG 7414 / JCM 2152 / NBRC 15305 / NCIMB 9373 / NCTC 2599 / NRRL B-3711).